The chain runs to 109 residues: Sperm-specific class P protein 10 (109 aa).

Residues 2–109 (SLTADPPACT…TVTIPMSATA (108 aa)) form the MSP domain.

In terms of tissue distribution, expressed at higher level in testis.

This Caenorhabditis elegans protein is Sperm-specific class P protein 10 (ssp-10).